Consider the following 194-residue polypeptide: Peptidyl-tRNA hydrolase (194 aa).

Position 17 (Tyr-17) interacts with tRNA. His-22 serves as the catalytic Proton acceptor. Residues Tyr-68, Asn-70, and Asn-116 each coordinate tRNA.

It belongs to the PTH family. Monomer.

The protein resides in the cytoplasm. It catalyses the reaction an N-acyl-L-alpha-aminoacyl-tRNA + H2O = an N-acyl-L-amino acid + a tRNA + H(+). In terms of biological role, hydrolyzes ribosome-free peptidyl-tRNAs (with 1 or more amino acids incorporated), which drop off the ribosome during protein synthesis, or as a result of ribosome stalling. Functionally, catalyzes the release of premature peptidyl moieties from peptidyl-tRNA molecules trapped in stalled 50S ribosomal subunits, and thus maintains levels of free tRNAs and 50S ribosomes. In Pseudomonas fluorescens (strain SBW25), this protein is Peptidyl-tRNA hydrolase.